A 212-amino-acid polypeptide reads, in one-letter code: LexA repressor (212 aa).

Positions 26–46 (VREIGEAVGLSSTSTVHGHID) form a DNA-binding region, H-T-H motif. Residues Ser-128 and Lys-171 each act as for autocatalytic cleavage activity in the active site.

Belongs to the peptidase S24 family. In terms of assembly, homodimer.

It catalyses the reaction Hydrolysis of Ala-|-Gly bond in repressor LexA.. In terms of biological role, represses a number of genes involved in the response to DNA damage (SOS response), including recA and lexA. In the presence of single-stranded DNA, RecA interacts with LexA causing an autocatalytic cleavage which disrupts the DNA-binding part of LexA, leading to derepression of the SOS regulon and eventually DNA repair. The chain is LexA repressor from Oenococcus oeni (strain ATCC BAA-331 / PSU-1).